The primary structure comprises 237 residues: Necrosis-inducing protein NPP1 (237 aa).

The signal sequence occupies residues 1–19 (MNVLTFLIAAAVSLAVVQA). Asparagine 67 carries N-linked (GlcNAc...) asparagine glycosylation. Positions 103–113 (AIMYSWYFPKD) match the Conserved undecapeptide motif motif. A Conserved heptapetpide motif motif is present at residues 120–126 (GHRHDWE).

This sequence belongs to the Necrosis inducing protein (NPP1) family.

It is found in the secreted. In terms of biological role, secreted effector that acts as a pathogen-associated molecular pattern (PAMP) recognized by the plant immune system. Induces necrotic cell death and ethylene biosynthesis in parsley. Stimulates early induced host cellular responses implicated in elicitor signal transmission such as increased levels of cytoplasmic calcium, production of reactive oxygen species (ROS), and MAP kinase activation. Infiltration of NPP1 into leaves of Arabidopsis thaliana results in transcript accumulation of pathogenesis-related (PR) genes, production of ROS and ethylene, callose apposition, and hypersensitive response (HR)-like cell death. NPP1-mediated induction of the PR1 gene is salicylic acid-dependent, and requires both functional NDR1 and PAD4. This chain is Necrosis-inducing protein NPP1, found in Phytophthora nicotianae (Potato buckeye rot agent).